The primary structure comprises 174 residues: MGKITFYEDRGFQGRHYECSTDHSNLQPYFSRCNSVRVDSGCWMLYEQPNFTGCQYFLRRGDYPDYQQWMGFSDSVRSCRLIPHAGSHRIRLYEREDYRGQMVEFTEDCPSLQDRFHFNEIYSLNVLEGCWVLYEMTNYRGRQYLLRPGEYRRYHDWGAMNARVGSLRRVMDFY.

2 Beta/gamma crystallin 'Greek key' domains span residues 2–40 and 41–83; these read GKIT…RVDS and GCWM…RLIP. Positions 84–87 are connecting peptide; that stretch reads HAGS. Beta/gamma crystallin 'Greek key' domains follow at residues 88 to 128 and 129 to 171; these read HRIR…NVLE and GCWV…RRVM.

This sequence belongs to the beta/gamma-crystallin family. As to expression, detected in the superior olivary complex and fibers of the ventral aoustic stria of the auditory hindbrain.

Functionally, crystallins are the dominant structural components of the vertebrate eye lens. The sequence is that of Gamma-crystallin D (Crygd) from Rattus norvegicus (Rat).